The chain runs to 320 residues: Short-chain dehydrogenase/reductase ARMGADRAFT_1169971 (320 aa).

A helical membrane pass occupies residues 19 to 39 (KVAVVTGANSGIGLYILFHVA). NADP(+) contacts are provided by Ile-30, Asp-78, Asn-105, and Lys-136. N-linked (GlcNAc...) asparagine glycosylation occurs at Asn-157. The active-site Proton donor is Ser-159. NADP(+)-binding residues include Tyr-192, Lys-196, Val-227, and Ser-229. The active-site Proton acceptor is the Tyr-192. Lys-196 serves as the catalytic Lowers pKa of active site Tyr. The chain crosses the membrane as a helical span at residues 235–255 (LFTSLMFGTIINWVFSLFFIS).

This sequence belongs to the short-chain dehydrogenases/reductases (SDR) family.

It is found in the membrane. Its pathway is secondary metabolite biosynthesis. Short-chain dehydrogenase/reductase, part of the gene cluster that mediates the biosynthesis of melleolides, a range of antifungal and phytotoxic polyketide derivatives composed of an orsellinic acid (OA) moiety esterified to various sesquiterpene alcohols. The first step in melleolides biosynthesis is performed by the delta(6)-protoilludene synthase PRO1 which catalyzes the cyclization of farnesyl diphosphate to protoilludene. The orsellinic acid synthase armB produces OA by condensing acetyl-CoA with 3 malonyl-CoA units in a three-round chain elongation reaction folowed by a C2-C7 ring closure. ArmB further catalyzes the trans-esterification of OA to the various sesquiterpene alcohols resulting from the hydroxylation of protoilludene. The melleolides cluster also includes 5 cytochrome P450 monooxygenases, 4 NAD(+)-dependent oxidoreductases, one flavin-dependent oxidoreductase, and one O-methyltransferase. The cytochrome P450 monooxygenases may be involved in protoilludene hydroxylation to elaborate melleolides with multiple alcohol groups, such as melleolide D, which carries alcohol functionalities at C-4, C-5, C-10, and C-13. The role of the NAD(+)-dependent enzymes remains unknown. Numerous melleolides, including arnamial, show 5'-O-methylation of the aromatic moiety which may be catalyzed by the methyltransferase encoded in the cluster. The flavin-dependent oxidoreductase might represent the dehydrogenase yielding the aldehyde in position 1 of arnamial and other melleolides. Finally, several halogenase localized outside of the cluster, are able to catalyze the transfer of a single chlorine atom to the melleolide backbone, resulting in a 6'-chloromelleolide product. This chain is Short-chain dehydrogenase/reductase ARMGADRAFT_1169971, found in Armillaria gallica (Bulbous honey fungus).